Here is a 194-residue protein sequence, read N- to C-terminus: GTP cyclohydrolase 1 (194 aa).

Zn(2+)-binding residues include cysteine 83, histidine 86, and cysteine 155.

It belongs to the GTP cyclohydrolase I family. As to quaternary structure, toroid-shaped homodecamer, composed of two pentamers of five dimers.

It carries out the reaction GTP + H2O = 7,8-dihydroneopterin 3'-triphosphate + formate + H(+). It participates in cofactor biosynthesis; 7,8-dihydroneopterin triphosphate biosynthesis; 7,8-dihydroneopterin triphosphate from GTP: step 1/1. This chain is GTP cyclohydrolase 1, found in Streptococcus pyogenes serotype M5 (strain Manfredo).